Reading from the N-terminus, the 493-residue chain is 3-octaprenyl-4-hydroxybenzoate carboxy-lyase (493 aa).

Asn-172 contacts Mn(2+). Prenylated FMN contacts are provided by residues 175-177 (IYR), 189-191 (RWL), and 194-195 (RG). Residue Glu-238 participates in Mn(2+) binding. The active-site Proton donor is the Asp-287.

It belongs to the UbiD family. Homohexamer. Requires prenylated FMN as cofactor. Mn(2+) serves as cofactor.

It localises to the cell membrane. The enzyme catalyses a 4-hydroxy-3-(all-trans-polyprenyl)benzoate + H(+) = a 2-(all-trans-polyprenyl)phenol + CO2. The protein operates within cofactor biosynthesis; ubiquinone biosynthesis. Functionally, catalyzes the decarboxylation of 3-octaprenyl-4-hydroxy benzoate to 2-octaprenylphenol, an intermediate step in ubiquinone biosynthesis. In Shewanella sp. (strain ANA-3), this protein is 3-octaprenyl-4-hydroxybenzoate carboxy-lyase.